The chain runs to 707 residues: MLLSVFIILINTLFVLAIPPKEGSDNNPSKKYLVTDLPGLYENVKPKISVPLMFSGQLELYPENNTHYFFWKFVDSELNQDTSKKTIFWLNGGPGCSSMDGALLETGPFRIDENEKVIYNNGSWHKFGDIIYVDQPAGTGFSFTNEYITDLDQVAWYFLKFMEEYYKLFPNEINNEIYFAGESYAGQYIPYIADAILKRNKNLKENDVKYDLKGILIGNGWVSPNQQSLSYLPFFINHGLIDKSHPRWGSLLSKHEKCQKIVNKIDGHFDEADVHPYEVNSATCESILTDLLNYSQDRESDSDHRCINMYDYTLRDSYPSCGMNWPFELKYVAPFLRKEEVMHDLNLVDLKYWRECSGKVGRMFGARNSLPAVHLLPNISQEIPIILFNGANDIICNSDGVLSYLDKLQWGGKVGFTNKDDQINWIYDNKEVGYILMERNISFINIYNSSHMVPYDLPDVSRALMDLVSGKYEEKEKDGKREFITYPLGEVRNKLGQEIPADESSKPIEDKPDDKPIEDKPEETKPEQTKPEDETSSSTSEIIPTSEASFIPEPEESTSSKFTRLIQLGVIFIIFWGVYILYVSYRARPSSIIKKPARSTNSSGRKKNVQWADQLNRFEEDENELGSPPPQGIIAKTISKITGNTSNRGRYAPAGDGSREFTDDIELGEGISDPNVDEFIIGSDDDEDDDEDVETHEGNPKKTESKS.

Residues 1–17 (MLLSVFIILINTLFVLA) form the signal peptide. Topologically, residues 18–564 (IPPKEGSDNN…EESTSSKFTR (547 aa)) are lumenal. 2 N-linked (GlcNAc...) asparagine glycosylation sites follow: N64 and N121. S183 is an active-site residue. N-linked (GlcNAc...) asparagine glycosylation is found at N293 and N378. D393 is an active-site residue. N-linked (GlcNAc...) asparagine glycosylation is found at N440 and N448. H451 is an active-site residue. Positions 496-557 (GQEIPADESS…ASFIPEPEES (62 aa)) are disordered. Residues 503–533 (ESSKPIEDKPDDKPIEDKPEETKPEQTKPED) show a composition bias toward basic and acidic residues. Low complexity predominate over residues 536-549 (SSSTSEIIPTSEAS). The chain crosses the membrane as a helical span at residues 565–585 (LIQLGVIFIIFWGVYILYVSY). Residues 586–707 (RARPSSIIKK…GNPKKTESKS (122 aa)) lie on the Cytoplasmic side of the membrane. Residues 644 to 707 (NTSNRGRYAP…GNPKKTESKS (64 aa)) are disordered. A compositionally biased stretch (acidic residues) spans 683 to 694 (SDDDEDDDEDVE). Basic and acidic residues predominate over residues 695 to 707 (THEGNPKKTESKS).

It belongs to the peptidase S10 family.

It is found in the golgi apparatus. Its subcellular location is the trans-Golgi network membrane. The catalysed reaction is Preferential release of a C-terminal arginine or lysine residue.. Functionally, protease with a carboxypeptidase B-like function involved in the C-terminal processing of the lysine and arginine residues from protein precursors. Promotes cell fusion and is involved in the programmed cell death. The polypeptide is Pheromone-processing carboxypeptidase KEX1 (KEX1) (Candida tropicalis (strain ATCC MYA-3404 / T1) (Yeast)).